The following is a 338-amino-acid chain: Holliday junction branch migration complex subunit RuvB (338 aa).

The tract at residues 1–180 (MERLLDNKFS…FGIIERLDYY (180 aa)) is large ATPase domain (RuvB-L). Residues L19, R20, G61, K64, T65, T66, R170, Y180, and R217 each contribute to the ATP site. T65 is a Mg(2+) binding site. The tract at residues 181–251 (TVEELSQIVM…VAKSGLEMFE (71 aa)) is small ATPAse domain (RuvB-S). Residues 254–338 (EYGLDLVDRN…FKLKESGDNR (85 aa)) are head domain (RuvB-H). DNA contacts are provided by K309 and R314.

This sequence belongs to the RuvB family. As to quaternary structure, homohexamer. Forms an RuvA(8)-RuvB(12)-Holliday junction (HJ) complex. HJ DNA is sandwiched between 2 RuvA tetramers; dsDNA enters through RuvA and exits via RuvB. An RuvB hexamer assembles on each DNA strand where it exits the tetramer. Each RuvB hexamer is contacted by two RuvA subunits (via domain III) on 2 adjacent RuvB subunits; this complex drives branch migration. In the full resolvosome a probable DNA-RuvA(4)-RuvB(12)-RuvC(2) complex forms which resolves the HJ.

It localises to the cytoplasm. The catalysed reaction is ATP + H2O = ADP + phosphate + H(+). The RuvA-RuvB-RuvC complex processes Holliday junction (HJ) DNA during genetic recombination and DNA repair, while the RuvA-RuvB complex plays an important role in the rescue of blocked DNA replication forks via replication fork reversal (RFR). RuvA specifically binds to HJ cruciform DNA, conferring on it an open structure. The RuvB hexamer acts as an ATP-dependent pump, pulling dsDNA into and through the RuvAB complex. RuvB forms 2 homohexamers on either side of HJ DNA bound by 1 or 2 RuvA tetramers; 4 subunits per hexamer contact DNA at a time. Coordinated motions by a converter formed by DNA-disengaged RuvB subunits stimulates ATP hydrolysis and nucleotide exchange. Immobilization of the converter enables RuvB to convert the ATP-contained energy into a lever motion, pulling 2 nucleotides of DNA out of the RuvA tetramer per ATP hydrolyzed, thus driving DNA branch migration. The RuvB motors rotate together with the DNA substrate, which together with the progressing nucleotide cycle form the mechanistic basis for DNA recombination by continuous HJ branch migration. Branch migration allows RuvC to scan DNA until it finds its consensus sequence, where it cleaves and resolves cruciform DNA. The polypeptide is Holliday junction branch migration complex subunit RuvB (Caldicellulosiruptor bescii (strain ATCC BAA-1888 / DSM 6725 / KCTC 15123 / Z-1320) (Anaerocellum thermophilum)).